A 359-amino-acid chain; its full sequence is Protein Wnt-2 (359 aa).

An N-terminal signal peptide occupies residues 1-25 (MNAPLAGIWPWLPLLWAWLVPEVSS). 11 cysteine pairs are disulfide-bonded: Cys75–Cys86, Cys126–Cys134, Cys136–Cys156, Cys205–Cys219, Cys207–Cys214, Cys277–Cys308, Cys293–Cys303, Cys307–Cys347, Cys323–Cys338, Cys325–Cys335, and Cys330–Cys331. A lipid anchor (O-palmitoleoyl serine; by PORCN) is attached at Ser211. A glycan (N-linked (GlcNAc...) asparagine) is linked at Asn294.

Belongs to the Wnt family. In terms of processing, palmitoleoylation is required for efficient binding to frizzled receptors. Depalmitoleoylation leads to Wnt signaling pathway inhibition.

It is found in the secreted. The protein resides in the extracellular space. Its subcellular location is the extracellular matrix. Functionally, ligand for members of the frizzled family of seven transmembrane receptors. Probable developmental protein. May be a signaling molecule which affects the development of discrete regions of tissues. Is likely to signal over only few cell diameters. This is Protein Wnt-2 (WNT2) from Echinops telfairi (Lesser hedgehog tenrec).